The chain runs to 454 residues: tRNA modification GTPase MnmE (454 aa).

3 residues coordinate (6S)-5-formyl-5,6,7,8-tetrahydrofolate: Arg23, Glu80, and Lys120. Positions Gly216–Gly377 constitute a TrmE-type G domain. Residue Asn226 participates in K(+) binding. GTP-binding positions include Asn226–Ser231, Thr245–Thr251, Asp270–Gly273, Asn335–Asp338, and Ser358–Arg360. Ser230 lines the Mg(2+) pocket. Positions 245, 247, and 250 each coordinate K(+). Thr251 contacts Mg(2+). Lys454 contributes to the (6S)-5-formyl-5,6,7,8-tetrahydrofolate binding site.

This sequence belongs to the TRAFAC class TrmE-Era-EngA-EngB-Septin-like GTPase superfamily. TrmE GTPase family. As to quaternary structure, homodimer. Heterotetramer of two MnmE and two MnmG subunits. The cofactor is K(+).

The protein resides in the cytoplasm. Exhibits a very high intrinsic GTPase hydrolysis rate. Involved in the addition of a carboxymethylaminomethyl (cmnm) group at the wobble position (U34) of certain tRNAs, forming tRNA-cmnm(5)s(2)U34. This is tRNA modification GTPase MnmE from Shigella flexneri serotype 5b (strain 8401).